Consider the following 243-residue polypeptide: Ribonuclease 3 (243 aa).

The 130-residue stretch at 15–144 (NDTISKIINY…LIGAIYIDGG (130 aa)) folds into the RNase III domain. Glu-57 provides a ligand contact to Mg(2+). Asp-61 is an active-site residue. Asn-130 and Glu-133 together coordinate Mg(2+). Glu-133 is an active-site residue. The DRBM domain occupies 169–238 (DPKTSLQEWT…AELMLEKINN (70 aa)).

This sequence belongs to the ribonuclease III family. Homodimer. Mg(2+) is required as a cofactor.

It localises to the cytoplasm. It carries out the reaction Endonucleolytic cleavage to 5'-phosphomonoester.. Functionally, digests double-stranded RNA. Involved in the processing of primary rRNA transcript to yield the immediate precursors to the large and small rRNAs (23S and 16S). Processes some mRNAs, and tRNAs when they are encoded in the rRNA operon. Processes pre-crRNA and tracrRNA of type II CRISPR loci if present in the organism. This Wolbachia sp. subsp. Brugia malayi (strain TRS) protein is Ribonuclease 3.